We begin with the raw amino-acid sequence, 469 residues long: Argininosuccinate lyase (469 aa).

The protein belongs to the lyase 1 family. Argininosuccinate lyase subfamily.

It is found in the cytoplasm. It carries out the reaction 2-(N(omega)-L-arginino)succinate = fumarate + L-arginine. It functions in the pathway amino-acid biosynthesis; L-arginine biosynthesis; L-arginine from L-ornithine and carbamoyl phosphate: step 3/3. The chain is Argininosuccinate lyase from Polaromonas naphthalenivorans (strain CJ2).